A 135-amino-acid chain; its full sequence is Snaclec rhodocetin subunit gamma (135 aa).

Disulfide bonds link Cys4–Cys15, Cys32–Cys129, and Cys104–Cys121. Positions Tyr11–Lys130 constitute a C-type lectin domain.

Belongs to the snaclec family. Heterotetramer of subunit alpha, beta, gamma and delta; only the gamma and the delta subunits are disulfide-linked. Alpha-beta heterodimer and gamma-delta heterodimer associate orthogonally, giving a cruciform conformation. This heterotetramer may covalently dimerizes thanks to the gamma subunit. In terms of tissue distribution, expressed by the venom gland.

The protein localises to the secreted. Functionally, potent inhibitor of collagen-induced platelet aggregation. It acts by binding to the integrin alpha2A domain and blocks collagen binding to integrin alpha-2/beta-1 (ITGA2/ITGB1). The gamma/delta subunits mainly contribute to this activity. The protein is Snaclec rhodocetin subunit gamma of Calloselasma rhodostoma (Malayan pit viper).